Consider the following 139-residue polypeptide: Histone H2AX (139 aa).

2 disordered regions span residues 1–21 and 119–139; these read MSGR…RSSR and KKSS…SQEY. Position 2 is an N-acetylserine (S2). A Phosphoserine modification is found at S2. Positions 7-19 are enriched in basic residues; sequence AVSKTRAKAKTRS. K10 is modified (N6-lactoyllysine; alternate). Residues K14, K16, and K120 each participate in a glycyl lysine isopeptide (Lys-Gly) (interchain with G-Cter in ubiquitin) cross-link. S136 is subject to Phosphoserine. The short motif at 136 to 137 is the [ST]-Q motif element; sequence SQ. Y139 carries the post-translational modification Phosphotyrosine; by WSTF.

The protein belongs to the histone H2A family. As to quaternary structure, the nucleosome is a histone octamer containing two molecules each of H2A, H2B, H3 and H4 assembled in one H3-H4 heterotetramer and two H2A-H2B heterodimers. The octamer wraps approximately 147 bp of DNA. Interacts with numerous proteins required for DNA damage signaling and repair when phosphorylated on Ser-136. In terms of processing, phosphorylated. Phosphorylation of Ser-136 (H2AX139ph) occurs in response to DNA double strand breaks (DSBs) generated by exogenous genotoxic agents, by stalled replication forks and by meiotic recombination events. Phosphorylation is dependent on the DNA damage checkpoint kinases ATR and ATM, spreads on either side of a detected DSB site and may mark the surrounding chromatin for recruitment of proteins required for DNA damage signaling and repair. Widespread phosphorylation may also serve to amplify the damage signal or aid repair of persistent lesions. Dephosphorylation of Ser-136 is required for DNA DSB repair. Phosphorylation at Tyr-139 (H2AXY142ph) by baz1b/wstf determines the relative recruitment of either DNA repair or pro-apoptotic factors. Phosphorylation at Tyr-139 (H2AXY142ph) favors the recruitment of pro-apoptosis factors. In contrast, dephosphorylation of Tyr-139 by EYA proteins (eya1, eya2, eya3 or eya4) favors the recruitment of MDC1-containing DNA repair complexes to the tail of phosphorylated Ser-136 (H2AX139ph). Phosphorylated by VRK1. Post-translationally, monoubiquitination of Lys-120 (H2AXK119ub) by ring1 and rnf2/ring2 complex gives a specific tag for epigenetic transcriptional repression. Following DNA double-strand breaks (DSBs), it is ubiquitinated through 'Lys-63' linkage of ubiquitin moieties by the E2 ligase ube2n and the E3 ligases rnf8 and rnf168, leading to the recruitment of repair proteins to sites of DNA damage. Ubiquitination at Lys-14 and Lys-16 (H2AK13Ub and H2AK15Ub, respectively) in response to DNA damage is initiated by rnf168 that mediates monoubiquitination at these 2 sites, and 'Lys-63'-linked ubiquitin are then conjugated to monoubiquitin; rnf8 is able to extend 'Lys-63'-linked ubiquitin chains in vitro. H2AK119Ub and ionizing radiation-induced 'Lys-63'-linked ubiquitination (H2AK13Ub and H2AK15Ub) are distinct events.

Its subcellular location is the nucleus. The protein resides in the chromosome. Functionally, variant histone H2A which replaces conventional H2A in a subset of nucleosomes. Nucleosomes wrap and compact DNA into chromatin, limiting DNA accessibility to the cellular machineries which require DNA as a template. Histones thereby play a central role in transcription regulation, DNA repair, DNA replication and chromosomal stability. DNA accessibility is regulated via a complex set of post-translational modifications of histones, also called histone code, and nucleosome remodeling. Required for checkpoint-mediated arrest of cell cycle progression in response to low doses of ionizing radiation and for efficient repair of DNA double strand breaks (DSBs) specifically when modified by C-terminal phosphorylation. The sequence is that of Histone H2AX (h2ax) from Xenopus laevis (African clawed frog).